We begin with the raw amino-acid sequence, 407 residues long: Biotin synthase (407 aa).

One can recognise a Radical SAM core domain in the interval Trp47 to Arg277. Residues Cys65, Cys69, and Cys72 each coordinate [4Fe-4S] cluster. [2Fe-2S] cluster-binding residues include Cys109, Cys142, Cys202, and Arg272. Residues Gly368–Ala407 are disordered. Residues Ala373–Arg382 show a composition bias toward low complexity.

It belongs to the radical SAM superfamily. Biotin synthase family. As to quaternary structure, homodimer. The cofactor is [4Fe-4S] cluster. [2Fe-2S] cluster serves as cofactor.

The enzyme catalyses (4R,5S)-dethiobiotin + (sulfur carrier)-SH + 2 reduced [2Fe-2S]-[ferredoxin] + 2 S-adenosyl-L-methionine = (sulfur carrier)-H + biotin + 2 5'-deoxyadenosine + 2 L-methionine + 2 oxidized [2Fe-2S]-[ferredoxin]. The protein operates within cofactor biosynthesis; biotin biosynthesis; biotin from 7,8-diaminononanoate: step 2/2. Functionally, catalyzes the conversion of dethiobiotin (DTB) to biotin by the insertion of a sulfur atom into dethiobiotin via a radical-based mechanism. The polypeptide is Biotin synthase (Streptomyces coelicolor (strain ATCC BAA-471 / A3(2) / M145)).